The chain runs to 86 residues: MAQKKGGGSTRNGRDSESKRLGVKVFGGQAINAGGIIVRQRGTRVHAGENVGIGKDHTLFALVDGHVQFAVKGAAKKQQVSVVPAA.

It belongs to the bacterial ribosomal protein bL27 family.

The polypeptide is Large ribosomal subunit protein bL27 (Cupriavidus metallidurans (strain ATCC 43123 / DSM 2839 / NBRC 102507 / CH34) (Ralstonia metallidurans)).